The following is a 294-amino-acid chain: tRNA dimethylallyltransferase (294 aa).

11–18 (GPTAVGKT) lines the ATP pocket. 13–18 (TAVGKT) serves as a coordination point for substrate. The segment at 36–39 (DSQQ) is interaction with substrate tRNA.

It belongs to the IPP transferase family. As to quaternary structure, monomer. The cofactor is Mg(2+).

The catalysed reaction is adenosine(37) in tRNA + dimethylallyl diphosphate = N(6)-dimethylallyladenosine(37) in tRNA + diphosphate. In terms of biological role, catalyzes the transfer of a dimethylallyl group onto the adenine at position 37 in tRNAs that read codons beginning with uridine, leading to the formation of N6-(dimethylallyl)adenosine (i(6)A). The chain is tRNA dimethylallyltransferase from Lactococcus lactis subsp. cremoris (strain SK11).